We begin with the raw amino-acid sequence, 344 residues long: Gibberellin receptor GID1C (344 aa).

N-acetylalanine is present on A2. Residues 111–113 (HGG) carry the Involved in the stabilization of the negatively charged intermediate by the formation of the oxyanion hole motif. Gibberellin A4 contacts are provided by residues 113–114 (GS), Y125, and S189. Residues S114, Y125, S189, and F236 each coordinate gibberellin A3. The active site involves S189. The active site involves D287. Residue G318 participates in gibberellin A4 binding. G318 is a gibberellin A3 binding site.

The protein belongs to the 'GDXG' lipolytic enzyme family. Interacts with the DELLA proteins GAI, RGA, RGL1, RGL2 and RGL3 in a GA-dependent manner. Widely expressed.

It is found in the nucleus. Functions as a soluble gibberellin (GA) receptor. GA is an essential hormone that regulates growth and development in plants. Binds with high affinity the biologically active gibberellin GA4, but has no affinity for the biologically inactive GAs. In response to GA, interacts with specific DELLA proteins, known as repressors of GA-induced growth, and targets them for degradation via proteasome. Seems to be required for GA signaling that controls root growth, seed germination and stem elongation. Partially redundant with GID1A and GID1B. This Arabidopsis thaliana (Mouse-ear cress) protein is Gibberellin receptor GID1C (GID1C).